The sequence spans 186 residues: Ribonuclease M5 (186 aa).

Residues 4-94 enclose the Toprim domain; it reads KEIIVVEGRD…AKPKNKRGIG (91 aa). Positions 10, 56, and 58 each coordinate Mg(2+).

Belongs to the ribonuclease M5 family. In terms of assembly, requires ribosomal protein L18 (rplR) for catalysis; it can be replaced by 30% dimethylsulfoxide suggesting L18 functions as an rRNA folding chaperone. The cofactor is Mg(2+). Mn(2+) serves as cofactor. It depends on Ca(2+) as a cofactor.

It is found in the cytoplasm. The catalysed reaction is Endonucleolytic cleavage of RNA, removing 21 and 42 nucleotides, respectively, from the 5'- and 3'-termini of a 5S-rRNA precursor.. Functionally, required for correct processing of both the 5' and 3' ends of 5S rRNA precursor. Cleaves both sides of a double-stranded region yielding mature 5S rRNA in one step. Releases 5'-phosphoryl and 3'-hydroxy termini. This Bacillus subtilis (strain 168) protein is Ribonuclease M5.